Here is a 498-residue protein sequence, read N- to C-terminus: Glycerol kinase (498 aa).

T12 provides a ligand contact to ADP. Positions 12, 13, and 14 each coordinate ATP. T12 is a binding site for sn-glycerol 3-phosphate. R16 is an ADP binding site. Sn-glycerol 3-phosphate is bound by residues R82, E83, Y134, and D244. The glycerol site is built by R82, E83, Y134, D244, and Q245. The ADP site is built by T266 and G309. Positions 266, 309, 313, and 410 each coordinate ATP. The ADP site is built by G410 and N414.

Belongs to the FGGY kinase family. As to quaternary structure, homotetramer and homodimer (in equilibrium).

The catalysed reaction is glycerol + ATP = sn-glycerol 3-phosphate + ADP + H(+). It functions in the pathway polyol metabolism; glycerol degradation via glycerol kinase pathway; sn-glycerol 3-phosphate from glycerol: step 1/1. Activated by phosphorylation and inhibited by fructose 1,6-bisphosphate (FBP). Functionally, key enzyme in the regulation of glycerol uptake and metabolism. Catalyzes the phosphorylation of glycerol to yield sn-glycerol 3-phosphate. The sequence is that of Glycerol kinase from Natranaerobius thermophilus (strain ATCC BAA-1301 / DSM 18059 / JW/NM-WN-LF).